The sequence spans 361 residues: Caveolae-associated protein 4 (361 aa).

The segment at 1–21 (MEHNGSASNADKIHQNRLSNV) is disordered. Positions 100–124 (IKDVKARVEKQQTHVKKVEAKQEEI) form a coiled coil. Phosphoserine is present on residues serine 152, serine 171, and serine 172. Residues 204–248 (ENMQKTRQNFDKKVNRIRTRIVTPERRERLRQSGERLRQSGERLK) are a coiled coil. Residues 230-255 (RERLRQSGERLRQSGERLKQSGERFK) are compositionally biased toward basic and acidic residues. Disordered regions lie at residues 230–283 (RERL…AVAE) and 310–346 (PEALSETDPEEASATHPPQEGGEVSTPEPLKVTFKPQ). Phosphothreonine is present on threonine 335. Serine 354 is subject to Phosphoserine.

This sequence belongs to the CAVIN family. In terms of assembly, component of the CAVIN complex composed of CAVIN1, CAVIN2, CAVIN3 and CAVIN4. Interacts with CAVIN1, ADRA1A, ADRA1B, MAPK1 and MAPK3. Interacts with CAVIN2; this augments the transactivation of NPPA.

It localises to the cytoplasm. The protein resides in the myofibril. Its subcellular location is the sarcomere. The protein localises to the cytosol. It is found in the cell membrane. It localises to the sarcolemma. The protein resides in the membrane. Its subcellular location is the caveola. Its function is as follows. Modulates the morphology of formed caveolae in cardiomyocytes, but is not required for caveolar formation. Facilitates the recruitment of MAPK1/3 to caveolae within cardiomyocytes and regulates alpha-1 adrenergic receptor-induced hypertrophic responses in cardiomyocytes through MAPK1/3 activation. Contributes to proper membrane localization and stabilization of caveolin-3 (CAV3) in cardiomyocytes. Induces RHOA activation and activates NPPA transcription and myofibrillar organization through the Rho/ROCK signaling pathway. The polypeptide is Caveolae-associated protein 4 (CAVIN4) (Bos taurus (Bovine)).